Reading from the N-terminus, the 83-residue chain is Small ribosomal subunit protein bS18A (83 aa).

It belongs to the bacterial ribosomal protein bS18 family. As to quaternary structure, part of the 30S ribosomal subunit. Forms a tight heterodimer with protein bS6.

Functionally, binds as a heterodimer with protein bS6 to the central domain of the 16S rRNA, where it helps stabilize the platform of the 30S subunit. This Nocardia farcinica (strain IFM 10152) protein is Small ribosomal subunit protein bS18A.